A 288-amino-acid chain; its full sequence is Aquaporin NIP2-1 (288 aa).

At methionine 1 the chain carries N-acetylmethionine. 2 helical membrane-spanning segments follow: residues 50 to 70 (LLAE…AIAV) and 77 to 97 (VVTL…LVYC). The short motif at 106–108 (NPA) is the NPA 1 element. 3 consecutive transmembrane segments (helical) span residues 126 to 146 (AYIT…RLLF), 170 to 190 (LQAF…VCAV), and 202 to 222 (GLII…VSGA). Positions 225 to 227 (NPA) match the NPA 2 motif. A helical membrane pass occupies residues 234 to 254 (LVWGCYKGIWIYLLAPTLGAV). Serine 278 bears the Phosphoserine mark.

It belongs to the MIP/aquaporin (TC 1.A.8) family. NIP (TC 1.A.8.12) subfamily. Specifically expressed in roots with high expression in root elongation zone and root stele.

The protein localises to the endoplasmic reticulum membrane. Functionally, low water transport activity in yeast cells. The chain is Aquaporin NIP2-1 (NIP2-1) from Arabidopsis thaliana (Mouse-ear cress).